A 440-amino-acid polypeptide reads, in one-letter code: Glutamyl-tRNA reductase (440 aa).

Substrate is bound by residues 55-58 (TCNR), Ser115, 120-122 (ETQ), and Gln126. Residue Cys56 is the Nucleophile of the active site. An NADP(+)-binding site is contributed by 199-204 (GSGEMG).

Belongs to the glutamyl-tRNA reductase family. In terms of assembly, homodimer.

The catalysed reaction is (S)-4-amino-5-oxopentanoate + tRNA(Glu) + NADP(+) = L-glutamyl-tRNA(Glu) + NADPH + H(+). Its pathway is porphyrin-containing compound metabolism; protoporphyrin-IX biosynthesis; 5-aminolevulinate from L-glutamyl-tRNA(Glu): step 1/2. Its function is as follows. Catalyzes the NADPH-dependent reduction of glutamyl-tRNA(Glu) to glutamate 1-semialdehyde (GSA). This Helicobacter hepaticus (strain ATCC 51449 / 3B1) protein is Glutamyl-tRNA reductase.